Here is a 1323-residue protein sequence, read N- to C-terminus: PH domain leucine-rich repeat-containing protein phosphatase 2 (1323 aa).

Residues 150 to 248 enclose the PH domain; it reads RILLSGIYNV…WQRQASKVVS (99 aa). 22 LRR repeats span residues 250 to 271, 273 to 296, 300 to 321, 323 to 344, 346 to 368, 369 to 390, 392 to 412, 416 to 439, 440 to 460, 461 to 480, 481 to 502, 503 to 524, 526 to 547, 549 to 570, 571 to 592, 595 to 616, 621 to 644, 645 to 666, 669 to 690, 692 to 713, 714 to 735, and 737 to 758; these read RISTVDLSCYSLEEVPEHLFYS, DITYLNLRHNFMQLERPGGLDTLY, QLKGLNLSHNKLGLFPILLCEI, TLTELNLSCNGFHDLPSQIGNL, NLQTLCLDGNFLTTLPEELGNLQ, QLSSLGISFNNFSQIPEVYEKL, MLDRVVMAGNCLEVLNLGVLN, HIKHVDLRMNHLKTMVIENLEGNK, HITHVDLRDNRLTDLDLSSLC, SLEQLHCGRNQLRELTLSGF, SLRTLYASSNRLTAVNVYPVPS, LLTFLDLSRNLLECVPDWACEA, KIEVLDVSYNLLTEVPVRILSS, SLRKLMLGHNHVQNLPTLVEHI, PLEVLDLQHNALTRLPDTLFSK, NLRYLNASANSLESLPSACTGE, MLQLLYLTNNLLTDQCIPVLVGHL, HLRILHLANNQLQTFPASKLNK, QLEELNLSGNKLKTIPTTIANC, RLHTLVAHSNNISIFPEILQLP, QIQFVDLSCNDLTEILIPEALP, and TLQDLDLTGNTNLVLEHKTLDI. Residues 785–1033 form the PPM-type phosphatase domain; it reads SHGLAEMAGQ…DNVGAMVVYL (249 aa). Residues Asp820, Gly821, Lys985, and Asp1024 each coordinate Mn(2+). The tract at residues 1060–1157 is disordered; sequence TIKDAPKPAT…DSDDDQPVEG (98 aa). Residues 1071–1097 are compositionally biased toward low complexity; sequence SSSSGIASEFSSEMSTSEVSSEVGSTA. Over residues 1122–1146 the composition is skewed to polar residues; it reads PTPTSGLFQRQPSSATFSSNQSDNG. Ser1210 carries the phosphoserine modification. Positions 1285–1323 are disordered; the sequence is HDLEEEVKEQMKQHQDSRLEPEPHEEDRTEPPEEFDTAL. Over residues 1292-1315 the composition is skewed to basic and acidic residues; it reads KEQMKQHQDSRLEPEPHEEDRTEP.

In terms of assembly, interacts with AKT1, AKT3 and PRKCB isoform beta-II. Interacts with STK4, RPS6KB1, RAF1. Interacts with FKBP5; FKBP5 acts as a scaffold for PHLPP2 and Akt. Interacts with NHERF1; NHERF1 scaffolds a heterotrimeric complex with PTEN. Mn(2+) is required as a cofactor. In colorectal cancer tissue, expression is highest in the surface epithelium of normal colonic mucosa adjacent to the cancer tissue but is largely excluded from the crypt bases. Expression is lost or significantly decreased in 80% of tested tumors (at protein level).

Its subcellular location is the cytoplasm. The protein resides in the membrane. It is found in the nucleus. The enzyme catalyses O-phospho-L-seryl-[protein] + H2O = L-seryl-[protein] + phosphate. The catalysed reaction is O-phospho-L-threonyl-[protein] + H2O = L-threonyl-[protein] + phosphate. With respect to regulation, inhibited by AKT1, AKT2 and AKT3. Activated by oleic acid and arachidonic acid. In terms of biological role, protein phosphatase involved in regulation of Akt and PKC signaling. Mediates dephosphorylation in the C-terminal domain hydrophobic motif of members of the AGC Ser/Thr protein kinase family; specifically acts on 'Ser-473' of AKT1, 'Ser-660' of PRKCB isoform beta-II and 'Ser-657' of PRKCA. Akt regulates the balance between cell survival and apoptosis through a cascade that primarily alters the function of transcription factors that regulate pro- and antiapoptotic genes. Dephosphorylation of 'Ser-473' of Akt triggers apoptosis and decreases cell proliferation. Also controls the phosphorylation of AKT3. Dephosphorylates STK4 on 'Thr-387' leading to STK4 activation and apoptosis. Dephosphorylates RPS6KB1 and is involved in regulation of cap-dependent translation. Inhibits cancer cell proliferation and may act as a tumor suppressor. Dephosphorylation of PRKCA and PRKCB leads to their destabilization and degradation. Dephosphorylates RAF1 inhibiting its kinase activity. This is PH domain leucine-rich repeat-containing protein phosphatase 2 (PHLPP2) from Homo sapiens (Human).